Reading from the N-terminus, the 75-residue chain is uncharacterized protein (75 aa).

The N-terminal stretch at 1 to 21 (MRLIVVSIMVTLLSGCGSIIS) is a signal peptide.

The protein to E.coli YidQ.

This is an uncharacterized protein from Escherichia coli O157:H7.